We begin with the raw amino-acid sequence, 581 residues long: Chaotic nuclear migration protein 67 (581 aa).

5 positions are modified to phosphoserine: Ser17, Ser20, Ser72, Ser85, and Ser89. Residues 86–150 (YQESPGLQER…PTDEHTSPDI (65 aa)) are disordered. The segment covering 94 to 114 (ERPKNEKDKSPIGTDVHKKDV) has biased composition (basic and acidic residues). Position 151 is a phosphoserine (Ser151). Coiled coils occupy residues 179-252 (LGYQ…DTIQ), 306-363 (FLCA…LSKQ), and 373-451 (KLTI…NTSE).

Interacts directly with ADY3 and YOR129C. Interacts with ADY4. Probable component of a SPB complex composed of ADY3, SSP1, DON1, MPC54, SPO21/MPC70, NUD1 and CNM67. Post-translationally, phosphorylated in its N-terminal part.

The protein resides in the cytoplasm. It localises to the cytoskeleton. Its subcellular location is the microtubule organizing center. It is found in the spindle pole body. Functionally, involved in the pathway that organizes the shaping and sizing of the prospore membrane (PSM) during sporulation. Required for the proper formation of the spindle pole body (SPB) outer plaque. May connect the outer plaque to the central plaque embedded in the nuclear envelope. This chain is Chaotic nuclear migration protein 67 (CNM67), found in Saccharomyces cerevisiae (strain ATCC 204508 / S288c) (Baker's yeast).